The chain runs to 80 residues: Translation initiation factor IF-1, chloroplastic (80 aa).

In terms of domain architecture, S1-like spans 1–72 (MKEHDLINME…TKGRILYRIR (72 aa)).

It belongs to the IF-1 family. As to quaternary structure, component of the 30S ribosomal translation pre-initiation complex which assembles on the 30S ribosome in the order IF-2 and IF-3, IF-1 and N-formylmethionyl-tRNA(fMet); mRNA recruitment can occur at any time during PIC assembly.

Its subcellular location is the plastid. It is found in the chloroplast. In terms of biological role, one of the essential components for the initiation of protein synthesis. Stabilizes the binding of IF-2 and IF-3 on the 30S subunit to which N-formylmethionyl-tRNA(fMet) subsequently binds. Helps modulate mRNA selection, yielding the 30S pre-initiation complex (PIC). Upon addition of the 50S ribosomal subunit IF-1, IF-2 and IF-3 are released leaving the mature 70S translation initiation complex. The polypeptide is Translation initiation factor IF-1, chloroplastic (Psilotum nudum (Whisk fern)).